The chain runs to 122 residues: Serum amyloid A-3 protein (122 aa).

Residues 1 to 18 (MKLSIGIIFCFLILGVNS) form the signal peptide. The tract at residues 88–122 (GRGAEDSKADQEANQWGRSGNDPNHFRPKGLPDKY) is disordered. Polar residues predominate over residues 99-109 (EANQWGRSGND).

It belongs to the SAA family. As to expression, expressed by the liver; secreted in plasma. Expressed in synovial fibroblasts.

It localises to the secreted. Its function is as follows. Major acute phase reactant. Apolipoprotein of the HDL complex. In vitro exhibits antimicrobial activity against Escherichia coli, Streptococcus uberis and Pseudomonas aeruginosa. The protein is Serum amyloid A-3 protein (SAA3) of Oryctolagus cuniculus (Rabbit).